The chain runs to 858 residues: Phosphoenolpyruvate carboxylase (858 aa).

Active-site residues include histidine 145 and lysine 531.

This sequence belongs to the PEPCase type 1 family. It depends on Mg(2+) as a cofactor.

It catalyses the reaction oxaloacetate + phosphate = phosphoenolpyruvate + hydrogencarbonate. Forms oxaloacetate, a four-carbon dicarboxylic acid source for the tricarboxylic acid cycle. In Thermus thermophilus (strain ATCC BAA-163 / DSM 7039 / HB27), this protein is Phosphoenolpyruvate carboxylase.